The sequence spans 167 residues: Phospholipase A and acyltransferase 1 (167 aa).

Residues 1 to 138 are Cytoplasmic-facing; it reads MAVNDCFSLT…GEGVSEQANR (138 aa). The region spanning 20–135 is the LRAT domain; the sequence is LIEVFRPCYQ…LRYGEGVSEQ (116 aa). Histidine 30 is an active-site residue. Cysteine 119 (acyl-thioester intermediate) is an active-site residue. A helical transmembrane segment spans residues 139 to 159; sequence AIGTIGLVAAGIDIFTFLGLF. Over 160–167 the chain is Lumenal; sequence PKRQGAKS.

Belongs to the H-rev107 family.

It is found in the membrane. Its subcellular location is the cytoplasm. The protein localises to the nucleus. It carries out the reaction a 1,2-diacyl-sn-glycero-3-phosphocholine + H2O = a 1-acyl-sn-glycero-3-phosphocholine + a fatty acid + H(+). It catalyses the reaction a 1,2-diacyl-sn-glycero-3-phosphocholine + H2O = a 2-acyl-sn-glycero-3-phosphocholine + a fatty acid + H(+). The catalysed reaction is 1,2-dihexadecanoyl-sn-glycero-3-phosphocholine + H2O = 2-hexadecanoyl-sn-glycero-3-phosphocholine + hexadecanoate + H(+). The enzyme catalyses 1,2-dihexadecanoyl-sn-glycero-3-phosphocholine + H2O = 1-hexadecanoyl-sn-glycero-3-phosphocholine + hexadecanoate + H(+). It carries out the reaction 1-hexadecanoyl-2-(5Z,8Z,11Z,14Z-eicosatetraenoyl)-sn-glycero-3-phosphoethanolamine + H2O = 2-(5Z,8Z,11Z,14Z)-eicosatetraenoyl-sn-glycero-3-phosphoethanolamine + hexadecanoate + H(+). It catalyses the reaction 1-hexadecanoyl-2-(5Z,8Z,11Z,14Z-eicosatetraenoyl)-sn-glycero-3-phosphoethanolamine + H2O = 1-hexadecanoyl-sn-glycero-3-phosphoethanolamine + (5Z,8Z,11Z,14Z)-eicosatetraenoate + H(+). The catalysed reaction is 1,2-di-(9Z-octadecenoyl)-sn-glycero-3-phosphoethanolamine + 1,2-dihexadecanoyl-sn-glycero-3-phosphocholine = hexadecanoyl-sn-glycero-3-phosphocholine + N-hexadecanoyl-1,2-di-(9Z-octadecenoyl)-sn-glycero-3-phosphoethanolamine + H(+). The enzyme catalyses 1,2-dihexadecanoyl-sn-glycero-3-phosphocholine + a 2-acyl-sn-glycero-3-phosphocholine = a 1-hexadecanoyl-2-acyl-sn-glycero-3-phosphocholine + 2-hexadecanoyl-sn-glycero-3-phosphocholine. In terms of biological role, exhibits both phospholipase A1/2 and acyltransferase activities. Shows phospholipase A1 (PLA1) and A2 (PLA2) activity, catalyzing the calcium-independent release of fatty acids from the sn-1 or sn-2 position of glycerophospholipids. Shows O-acyltransferase activity, catalyzing the transfer of a fatty acyl group from glycerophospholipid to the hydroxyl group of lysophospholipid. In Rattus norvegicus (Rat), this protein is Phospholipase A and acyltransferase 1.